The following is a 260-amino-acid chain: Indole-3-glycerol phosphate synthase (260 aa).

This sequence belongs to the TrpC family.

The enzyme catalyses 1-(2-carboxyphenylamino)-1-deoxy-D-ribulose 5-phosphate + H(+) = (1S,2R)-1-C-(indol-3-yl)glycerol 3-phosphate + CO2 + H2O. It participates in amino-acid biosynthesis; L-tryptophan biosynthesis; L-tryptophan from chorismate: step 4/5. In Staphylococcus aureus (strain MRSA252), this protein is Indole-3-glycerol phosphate synthase.